Here is a 415-residue protein sequence, read N- to C-terminus: Transfer protein TraSA (415 aa).

Residues 127–326 (DGAVHYRDYR…HRVNDETSAN (200 aa)) enclose the FtsK domain. 145–152 (GATESGKS) is an ATP binding site.

This Streptomyces ambofaciens protein is Transfer protein TraSA (traSA).